The following is a 242-amino-acid chain: Probable transcriptional regulatory protein BURPS1710b_1385 (242 aa).

The protein belongs to the TACO1 family.

Its subcellular location is the cytoplasm. This chain is Probable transcriptional regulatory protein BURPS1710b_1385, found in Burkholderia pseudomallei (strain 1710b).